The following is a 409-amino-acid chain: uncharacterized protein (409 aa).

A signal peptide spans 1 to 39 (MVSDSKLELPLPVNQQKPRRRRILKVHLLIAALILSAVG). Zn(2+)-binding residues include histidine 67, aspartate 69, glutamate 181, histidine 250, and histidine 271.

Belongs to the metallo-dependent hydrolases superfamily. Peptidase M19 family. As to quaternary structure, interacts with dil1. The cofactor is Zn(2+).

It catalyses the reaction an L-aminoacyl-L-amino acid + H2O = 2 an L-alpha-amino acid. This is an uncharacterized protein from Schizosaccharomyces pombe (strain 972 / ATCC 24843) (Fission yeast).